Consider the following 279-residue polypeptide: 5'-nucleotidase SurE 1 (279 aa).

A divalent metal cation contacts are provided by D12, D13, S45, and N103.

Belongs to the SurE nucleotidase family. A divalent metal cation serves as cofactor.

Its subcellular location is the cytoplasm. It carries out the reaction a ribonucleoside 5'-phosphate + H2O = a ribonucleoside + phosphate. Its function is as follows. Nucleotidase that shows phosphatase activity on nucleoside 5'-monophosphates. The chain is 5'-nucleotidase SurE 1 from Chlamydia caviae (strain ATCC VR-813 / DSM 19441 / 03DC25 / GPIC) (Chlamydophila caviae).